Here is a 228-residue protein sequence, read N- to C-terminus: Phosphoribosylformylglycinamidine synthase subunit PurQ (228 aa).

The Glutamine amidotransferase type-1 domain maps to 2 to 225 (KAAVISFPGS…INQTEGADVR (224 aa)). The active-site Nucleophile is Cys86. Active-site residues include His194 and Glu196.

As to quaternary structure, part of the FGAM synthase complex composed of 1 PurL, 1 PurQ and 2 PurS subunits.

The protein localises to the cytoplasm. The enzyme catalyses N(2)-formyl-N(1)-(5-phospho-beta-D-ribosyl)glycinamide + L-glutamine + ATP + H2O = 2-formamido-N(1)-(5-O-phospho-beta-D-ribosyl)acetamidine + L-glutamate + ADP + phosphate + H(+). The catalysed reaction is L-glutamine + H2O = L-glutamate + NH4(+). The protein operates within purine metabolism; IMP biosynthesis via de novo pathway; 5-amino-1-(5-phospho-D-ribosyl)imidazole from N(2)-formyl-N(1)-(5-phospho-D-ribosyl)glycinamide: step 1/2. Functionally, part of the phosphoribosylformylglycinamidine synthase complex involved in the purines biosynthetic pathway. Catalyzes the ATP-dependent conversion of formylglycinamide ribonucleotide (FGAR) and glutamine to yield formylglycinamidine ribonucleotide (FGAM) and glutamate. The FGAM synthase complex is composed of three subunits. PurQ produces an ammonia molecule by converting glutamine to glutamate. PurL transfers the ammonia molecule to FGAR to form FGAM in an ATP-dependent manner. PurS interacts with PurQ and PurL and is thought to assist in the transfer of the ammonia molecule from PurQ to PurL. This is Phosphoribosylformylglycinamidine synthase subunit PurQ from Lacticaseibacillus casei (strain BL23) (Lactobacillus casei).